A 194-amino-acid polypeptide reads, in one-letter code: Putative 3-methyladenine DNA glycosylase (194 aa).

The protein belongs to the DNA glycosylase MPG family.

This Chlamydia felis (strain Fe/C-56) (Chlamydophila felis) protein is Putative 3-methyladenine DNA glycosylase.